A 385-amino-acid polypeptide reads, in one-letter code: Polyketide synthase 4 (385 aa).

Residue C157 is part of the active site.

The protein belongs to the thiolase-like superfamily. Chalcone/stilbene synthases family. As to expression, expressed in glandular trichomes.

It localises to the cytoplasm. Functionally, polyketide synthase responsible for the biosynthesis of secondary metabolites. The sequence is that of Polyketide synthase 4 (PKSG4) from Cannabis sativa (Hemp).